The following is a 1071-amino-acid chain: V-type proton ATPase catalytic subunit A (1071 aa).

An N-acetylalanine modification is found at Ala-2. Position 131 is a phosphothreonine (Thr-131). 257 to 264 (GAFGCGKT) contacts ATP. The DOD-type homing endonuclease domain occupies 494–642 (LLGLWIGDGL…LVSLARSLGL (149 aa)). Residues Ser-858 and Ser-928 each carry the phosphoserine modification.

The protein belongs to the ATPase alpha/beta chains family. V-ATPase is a heteromultimeric enzyme composed of a peripheral catalytic V1 complex (components A to H) attached to an integral membrane V0 proton pore complex (components: a, c, c', c'', d, e, f and VOA1). Interacts with RAV1 and RAV2 components of the RAVE complex, which are essential for the stability and assembly of V-ATPase. Post-translationally, this protein undergoes a protein self splicing that involves a post-translational excision of the VDE intervening region (intein) followed by peptide ligation.

The protein localises to the vacuole membrane. The catalysed reaction is ATP + H2O + 4 H(+)(in) = ADP + phosphate + 5 H(+)(out). Catalytic subunit of the V1 complex of vacuolar(H+)-ATPase (V-ATPase), a multisubunit enzyme composed of a peripheral complex (V1) that hydrolyzes ATP and a membrane integral complex (V0) that translocates protons. V-ATPase is responsible for acidifying and maintaining the pH of intracellular compartments. Functionally, PI-SceI is an endonuclease that can cleave at a site present in a VMA1 allele that lacks the derived endonuclease segment of the open reading frame; cleavage at this site only occurs during meiosis and initiates 'homing', a genetic event that converts a VMA1 allele lacking VDE into one that contains it. This Saccharomyces cerevisiae (strain ATCC 204508 / S288c) (Baker's yeast) protein is V-type proton ATPase catalytic subunit A.